The chain runs to 129 residues: Small ribosomal subunit protein uS9 (129 aa).

It belongs to the universal ribosomal protein uS9 family.

The protein is Small ribosomal subunit protein uS9 of Pelodictyon phaeoclathratiforme (strain DSM 5477 / BU-1).